Consider the following 316-residue polypeptide: Glutathione synthetase (316 aa).

Residues 124–310 (EKLFTAWFPE…ITGKLMDAIE (187 aa)) enclose the ATP-grasp domain. Residue 150-207 (FREEHGDVILKPLDGMGGASIFRVKENDPNVSVIIETLTNHGQNYAMAQTFVPDISNG) coordinates ATP. Mg(2+) is bound by residues glutamate 281 and asparagine 283.

The protein belongs to the prokaryotic GSH synthase family. Mg(2+) serves as cofactor. It depends on Mn(2+) as a cofactor.

The enzyme catalyses gamma-L-glutamyl-L-cysteine + glycine + ATP = glutathione + ADP + phosphate + H(+). The protein operates within sulfur metabolism; glutathione biosynthesis; glutathione from L-cysteine and L-glutamate: step 2/2. This is Glutathione synthetase from Vibrio parahaemolyticus serotype O3:K6 (strain RIMD 2210633).